The following is an 804-amino-acid chain: Leucine--tRNA ligase (804 aa).

The 'HIGH' region signature appears at 39 to 50; that stretch reads PFPSGKGLHVGH. The 'KMSKS' region signature appears at 573 to 577; it reads KMSKS. Lysine 576 contributes to the ATP binding site.

This sequence belongs to the class-I aminoacyl-tRNA synthetase family.

The protein resides in the cytoplasm. It catalyses the reaction tRNA(Leu) + L-leucine + ATP = L-leucyl-tRNA(Leu) + AMP + diphosphate. In Lactobacillus gasseri (strain ATCC 33323 / DSM 20243 / BCRC 14619 / CIP 102991 / JCM 1131 / KCTC 3163 / NCIMB 11718 / NCTC 13722 / AM63), this protein is Leucine--tRNA ligase.